We begin with the raw amino-acid sequence, 254 residues long: Peptide methionine sulfoxide reductase A5 (254 aa).

The first 26 residues, 1–26 (MARGSAAAAIAGVVWVLLLLVGVASG), serve as a signal peptide directing secretion.

It belongs to the MsrA Met sulfoxide reductase family.

The catalysed reaction is L-methionyl-[protein] + [thioredoxin]-disulfide + H2O = L-methionyl-(S)-S-oxide-[protein] + [thioredoxin]-dithiol. It carries out the reaction [thioredoxin]-disulfide + L-methionine + H2O = L-methionine (S)-S-oxide + [thioredoxin]-dithiol. Its function is as follows. Catalyzes the reduction of methionine sulfoxide (MetSO) to methionine in proteins. Plays a protective role against oxidative stress by restoring activity to proteins that have been inactivated by methionine oxidation. MSRA family specifically reduces the MetSO S-enantiomer. The chain is Peptide methionine sulfoxide reductase A5 (MSRA5) from Oryza sativa subsp. japonica (Rice).